We begin with the raw amino-acid sequence, 415 residues long: Runt-related transcription factor 3 (415 aa).

Disordered stretches follow at residues Met-1–Ala-48, Gly-176–Pro-266, and Asn-375–Tyr-415. The Runt domain maps to Ser-54 to Arg-182. Residues Lys-186–Arg-205 are compositionally biased toward basic and acidic residues. Lys-192 is covalently cross-linked (Glycyl lysine isopeptide (Lys-Gly) (interchain with G-Cter in SUMO2)). Polar residues predominate over residues Thr-209–Asn-240. A Phosphoserine modification is found at Ser-243. Residues Ser-393–Ser-402 show a composition bias toward polar residues. Basic and acidic residues predominate over residues Arg-406–Tyr-415.

Heterodimer with CBFB. RUNX3 binds DNA as a monomer and through the Runt domain. DNA-binding is increased by heterodimerization. Interacts with TLE1 and SUV39H1. The tyrosine phosphorylated form (via runt domain) interacts with SRC (via protein kinase domain). Interacts with FYN and LCK. Interacts with FOXP3. Interacts with ZFHX3. Interacts with TBX21. Post-translationally, phosphorylated on tyrosine residues by SRC. Phosphorylated by LCK and FYN. In terms of tissue distribution, expressed in gastric cancer tissues (at protein level).

It is found in the nucleus. It localises to the cytoplasm. Functionally, forms the heterodimeric complex core-binding factor (CBF) with CBFB. RUNX members modulate the transcription of their target genes through recognizing the core consensus binding sequence 5'-TGTGGT-3', or very rarely, 5'-TGCGGT-3', within their regulatory regions via their runt domain, while CBFB is a non-DNA-binding regulatory subunit that allosterically enhances the sequence-specific DNA-binding capacity of RUNX. The heterodimers bind to the core site of a number of enhancers and promoters, including murine leukemia virus, polyomavirus enhancer, T-cell receptor enhancers, LCK, IL3 and GM-CSF promoters. May be involved in the control of cellular proliferation and/or differentiation. In association with ZFHX3, up-regulates CDKN1A promoter activity following TGF-beta stimulation. CBF complexes repress ZBTB7B transcription factor during cytotoxic (CD8+) T cell development. They bind to RUNX-binding sequence within the ZBTB7B locus acting as transcriptional silencer and allowing for cytotoxic T cell differentiation. CBF complexes binding to the transcriptional silencer is essential for recruitment of nuclear protein complexes that catalyze epigenetic modifications to establish epigenetic ZBTB7B silencing. Necessary for the development and survival of sensory neurons expressing parvalbumin. This Homo sapiens (Human) protein is Runt-related transcription factor 3 (RUNX3).